Consider the following 241-residue polypeptide: DNA repair protein RecO (241 aa).

This sequence belongs to the RecO family.

Involved in DNA repair and RecF pathway recombination. The protein is DNA repair protein RecO of Xanthomonas campestris pv. campestris (strain B100).